Reading from the N-terminus, the 126-residue chain is Fluoride-specific ion channel FluC (126 aa).

A run of 4 helical transmembrane segments spans residues Leu7–Ser24, Phe35–Val55, Leu69–Ser89, and Trp98–Gly118. Gly77 and Thr80 together coordinate Na(+).

Belongs to the fluoride channel Fluc/FEX (TC 1.A.43) family.

It localises to the cell inner membrane. The enzyme catalyses fluoride(in) = fluoride(out). With respect to regulation, na(+) is not transported, but it plays an essential structural role and its presence is essential for fluoride channel function. Its function is as follows. Fluoride-specific ion channel. Important for reducing fluoride concentration in the cell, thus reducing its toxicity. This chain is Fluoride-specific ion channel FluC, found in Koribacter versatilis (strain Ellin345).